Consider the following 303-residue polypeptide: Pseudouridine-5'-phosphate glycosidase (303 aa).

Glu25 functions as the Proton donor in the catalytic mechanism. The substrate site is built by Lys87 and Val107. Asp139 provides a ligand contact to Mn(2+). Ser141–Asp143 contributes to the substrate binding site. Lys160 serves as the catalytic Nucleophile.

This sequence belongs to the pseudouridine-5'-phosphate glycosidase family. Homotrimer. It depends on Mn(2+) as a cofactor.

It carries out the reaction D-ribose 5-phosphate + uracil = psi-UMP + H2O. Functionally, catalyzes the reversible cleavage of pseudouridine 5'-phosphate (PsiMP) to ribose 5-phosphate and uracil. Functions biologically in the cleavage direction, as part of a pseudouridine degradation pathway. The sequence is that of Pseudouridine-5'-phosphate glycosidase from Hahella chejuensis (strain KCTC 2396).